A 262-amino-acid chain; its full sequence is TLC domain-containing protein 4-B (262 aa).

Helical transmembrane passes span 6 to 26 (PLTV…FHVG), 53 to 73 (TVSS…LVYD), 90 to 110 (LNVA…IYYW), 122 to 142 (HLAA…PYFG), 177 to 197 (GVLM…IYYG), and 218 to 238 (AWII…IKIA). The TLC domain occupies 44-246 (RQKIEWNSRT…IAKGCYKVLY (203 aa)).

It belongs to the TLCD4 family.

The protein resides in the membrane. This Xenopus laevis (African clawed frog) protein is TLC domain-containing protein 4-B (tlcd4-b).